We begin with the raw amino-acid sequence, 440 residues long: Beta-1,3-galactosyl-O-glycosyl-glycoprotein beta-1,6-N-acetylglucosaminyltransferase (440 aa).

Residues 1 to 9 (MKMAGWKKK) are Cytoplasmic-facing. Residues 10 to 30 (LCPGHHLWALGCYMLLAVVSL) form a helical; Signal-anchor for type II membrane protein membrane-spanning segment. Over 31 to 440 (RLSLRFKCDV…RHKAIYGTEL (410 aa)) the chain is Lumenal. N-linked (GlcNAc...) asparagine; by host glycans are attached at residues Asn-72 and Asn-108. Disulfide bonds link Cys-73-Cys-230, Cys-164-Cys-384, Cys-185-Cys-212, and Cys-393-Cys-425.

This sequence belongs to the glycosyltransferase 14 family.

The protein resides in the host Golgi apparatus membrane. The catalysed reaction is a 3-O-[beta-D-galactosyl-(1-&gt;3)-N-acetyl-alpha-D-galactosaminyl]-L-seryl-[protein] + UDP-N-acetyl-alpha-D-glucosamine = 3-O-{beta-D-galactosyl-(1-&gt;3)-[N-acetyl-beta-D-glucosaminyl-(1-&gt;6)]-N-acetyl-alpha-D-galactosaminyl}-L-seryl-[protein] + UDP + H(+). It carries out the reaction a 3-O-[beta-D-galactosyl-(1-&gt;3)-N-acetyl-alpha-D-galactosaminyl]-L-threonyl-[protein] + UDP-N-acetyl-alpha-D-glucosamine = a 3-O-{beta-D-galactosyl-(1-&gt;3)-[N-acetyl-beta-D-glucosaminyl-(1-&gt;6)]-N-acetyl-alpha-D-galactosaminyl}-L-threonyl-[protein] + UDP + H(+). The enzyme catalyses a beta-D-Gal-(1-&gt;4)-beta-D-GlcNAc-(1-&gt;3)-beta-D-Gal-(1-&gt;4)-beta-D-GlcNAc derivative + UDP-N-acetyl-alpha-D-glucosamine = a beta-D-Gal-(1-&gt;4)-beta-D-GlcNAc-(1-&gt;3)-[beta-D-GlcNAc-(1-&gt;6)]-beta-D-Gal-(1-&gt;4)-N-acetyl-beta-D-glucosaminyl derivative + UDP + H(+). It catalyses the reaction 3-O-[N-acetyl-beta-D-glucosaminyl-(1-&gt;3)-N-acetyl-alpha-D-galactosaminyl]-L-seryl-[protein] + UDP-N-acetyl-alpha-D-glucosamine = 3-O-[N-acetyl-beta-D-glucosaminyl-(1-&gt;3)-[N-acetyl-beta-D-glucosaminyl-(1-&gt;6)]-N-acetyl-alpha-D-galactosaminyl]-L-seryl-[protein] + UDP + H(+). The catalysed reaction is a 3-O-[N-acetyl-beta-D-glucosaminyl-(1-&gt;3)-N-acetyl-alpha-D-galactosaminyl]-L-threonyl-[protein] + UDP-N-acetyl-alpha-D-glucosamine = 3-O-[N-acetyl-beta-D-glucosaminyl-(1-&gt;3)-[N-acetyl-beta-D-glucosaminyl-(1-&gt;6)]-N-acetyl-alpha-D-galactosaminyl]-L-threonyl-[protein] + UDP + H(+). It participates in protein modification; protein glycosylation. In terms of biological role, non-essential glycosyltransferase that can synthesize all known mucin beta 6 N-acetylglucosaminides. Mediates core 2 and core 4 O-glycan branching, 2 important steps in mucin-type biosynthesis. Has also I-branching enzyme activity by converting linear into branched poly-N-acetyllactosaminoglycans. Contributes to the post-translational modifications of structural proteins. This Bovine herpesvirus 4 (strain V. test) (BoHV-4) protein is Beta-1,3-galactosyl-O-glycosyl-glycoprotein beta-1,6-N-acetylglucosaminyltransferase (Bo17).